The chain runs to 286 residues: MIINHNMSAMYSNRVLGVTNLAQAKDMEKLSSGMKINRAGDDASGLAVSEKMRSQIRGLNQASRNAQNGISFIQVSEGYLQETTDIMHRIRELAVQSSNGIYSDEDRMQIQVEVSQLVAEVDRIASHAQFNGMNMLTGRFARATGENTVTGSMWLHIGANMDQRMQVFIGTMTAMAVGVREIGSEKVMSIAAPDDANRAIGTIDEGLKKINKQRADLGAYQNRLEMTVKGLDVAAENTQAAESTIRDTDMAKQMVDFTKNRILAQAGTAMLAQANVTTQNVLTLLQ.

It belongs to the bacterial flagellin family. As to quaternary structure, the core of the flagellum consists of several antigenically related polypeptides. In terms of processing, glycosylated. Glycosylation is not essential for motility.

It is found in the periplasmic flagellum. It localises to the periplasm. Its function is as follows. Component of the core of the flagella. This is Flagellar filament 31.3 kDa core protein (flaB2) from Treponema maltophilum.